A 31-amino-acid polypeptide reads, in one-letter code: Cytochrome b6-f complex subunit 6 (31 aa).

A helical transmembrane segment spans residues 3–23 (ILINYFLLVGFCFALASGLFL).

Belongs to the PetL family. The 4 large subunits of the cytochrome b6-f complex are cytochrome b6, subunit IV (17 kDa polypeptide, PetD), cytochrome f and the Rieske protein, while the 4 small subunits are PetG, PetL, PetM and PetN. The complex functions as a dimer.

The protein localises to the plastid. It is found in the chloroplast thylakoid membrane. Component of the cytochrome b6-f complex, which mediates electron transfer between photosystem II (PSII) and photosystem I (PSI), cyclic electron flow around PSI, and state transitions. PetL is important for photoautotrophic growth as well as for electron transfer efficiency and stability of the cytochrome b6-f complex. The chain is Cytochrome b6-f complex subunit 6 from Thalassiosira pseudonana (Marine diatom).